A 214-amino-acid polypeptide reads, in one-letter code: tRNA (guanine-N(7)-)-methyltransferase (214 aa).

The S-adenosyl-L-methionine site is built by E43, E68, D95, and D117. D117 is an active-site residue. Substrate is bound by residues K121, D153, and 190–193 (TEYE).

This sequence belongs to the class I-like SAM-binding methyltransferase superfamily. TrmB family.

It catalyses the reaction guanosine(46) in tRNA + S-adenosyl-L-methionine = N(7)-methylguanosine(46) in tRNA + S-adenosyl-L-homocysteine. It participates in tRNA modification; N(7)-methylguanine-tRNA biosynthesis. In terms of biological role, catalyzes the formation of N(7)-methylguanine at position 46 (m7G46) in tRNA. The polypeptide is tRNA (guanine-N(7)-)-methyltransferase (Staphylococcus aureus (strain MSSA476)).